The following is a 449-amino-acid chain: Tubulin alpha-1C chain (449 aa).

Residues 1 to 4 carry the MREC motif motif; sequence MREC. Residue Gln-11 participates in GTP binding. The residue at position 40 (Lys-40) is an N6-acetyllysine. The GTP site is built by Glu-71, Ser-140, Gly-144, Thr-145, Thr-179, Asn-206, and Asn-228. Residue Glu-71 participates in Mg(2+) binding. Residue Glu-254 is part of the active site. Tyr-282 is subject to 3'-nitrotyrosine. The tract at residues 429-449 is disordered; that stretch reads EKDYEEVGADSAEGDDEGDEY. A compositionally biased stretch (acidic residues) spans 431-449; that stretch reads DYEEVGADSAEGDDEGDEY. Tyr-432 is subject to Phosphotyrosine. A Phosphoserine modification is found at Ser-439. At Tyr-449 the chain carries 3'-nitrotyrosine.

Belongs to the tubulin family. Dimer of alpha and beta chains. A typical microtubule is a hollow water-filled tube with an outer diameter of 25 nm and an inner diameter of 15 nM. Alpha-beta heterodimers associate head-to-tail to form protofilaments running lengthwise along the microtubule wall with the beta-tubulin subunit facing the microtubule plus end conferring a structural polarity. Microtubules usually have 13 protofilaments but different protofilament numbers can be found in some organisms and specialized cells. Requires Mg(2+) as cofactor. In terms of processing, some glutamate residues at the C-terminus are polyglycylated, resulting in polyglycine chains on the gamma-carboxyl group. Glycylation is mainly limited to tubulin incorporated into axonemes (cilia and flagella) whereas glutamylation is prevalent in neuronal cells, centrioles, axonemes, and the mitotic spindle. Both modifications can coexist on the same protein on adjacent residues, and lowering polyglycylation levels increases polyglutamylation, and reciprocally. Cilia and flagella glycylation is required for their stability and maintenance. Flagella glycylation controls sperm motility. Post-translationally, some glutamate residues at the C-terminus are polyglutamylated, resulting in polyglutamate chains on the gamma-carboxyl group. Polyglutamylation plays a key role in microtubule severing by spastin (SPAST). SPAST preferentially recognizes and acts on microtubules decorated with short polyglutamate tails: severing activity by SPAST increases as the number of glutamates per tubulin rises from one to eight, but decreases beyond this glutamylation threshold. Glutamylation is also involved in cilia motility. Acetylation of alpha chains at Lys-40 is located inside the microtubule lumen. This modification has been correlated with increased microtubule stability, intracellular transport and ciliary assembly. In terms of processing, methylation of alpha chains at Lys-40 is found in mitotic microtubules and is required for normal mitosis and cytokinesis contributing to genomic stability. Post-translationally, nitration of Tyr-449 is irreversible and interferes with normal dynein intracellular distribution. Undergoes a tyrosination/detyrosination cycle, the cyclic removal and re-addition of a C-terminal tyrosine residue by the enzymes tubulin tyrosine carboxypeptidase (MATCAP1, VASH1 or VASH2) and tubulin tyrosine ligase (TTL), respectively. In terms of processing, tyrosination promotes microtubule interaction with CAP-Gly domain-containing proteins such as CLIP1, CLIP2 and DCTN1. Tyrosination regulates the initiation of dynein-dynactin motility via interaction with DCTN1, which brings the dynein-dynactin complex into contact with microtubules. In neurons, tyrosinated tubulins mediate the initiation of retrograde vesicle transport. Post-translationally, detyrosination is involved in metaphase plate congression by guiding chromosomes during mitosis: detyrosination promotes interaction with CENPE, promoting pole-proximal transport of chromosomes toward the equator. Detyrosination increases microtubules-dependent mechanotransduction in dystrophic cardiac and skeletal muscle. In cardiomyocytes, detyrosinated microtubules are required to resist to contractile compression during contraction: detyrosination promotes association with desmin (DES) at force-generating sarcomeres, leading to buckled microtubules and mechanical resistance to contraction.

It is found in the cytoplasm. It localises to the cytoskeleton. The enzyme catalyses GTP + H2O = GDP + phosphate + H(+). In terms of biological role, tubulin is the major constituent of microtubules, a cylinder consisting of laterally associated linear protofilaments composed of alpha- and beta-tubulin heterodimers. Microtubules grow by the addition of GTP-tubulin dimers to the microtubule end, where a stabilizing cap forms. Below the cap, tubulin dimers are in GDP-bound state, owing to GTPase activity of alpha-tubulin. The polypeptide is Tubulin alpha-1C chain (TUBA1C) (Bos taurus (Bovine)).